The sequence spans 362 residues: sn-glycerol-3-phosphate import ATP-binding protein UgpC (362 aa).

An ABC transporter domain is found at 4–235 (LKLQAVTKSY…PATLFVASFI (232 aa)). 37–44 (GPSGCGKS) is an ATP binding site.

Belongs to the ABC transporter superfamily. sn-glycerol-3-phosphate importer (TC 3.A.1.1.3) family. The complex is composed of two ATP-binding proteins (UgpC), two transmembrane proteins (UgpA and UgpE) and a solute-binding protein (UgpB).

The protein localises to the cell inner membrane. It carries out the reaction sn-glycerol 3-phosphate(out) + ATP + H2O = sn-glycerol 3-phosphate(in) + ADP + phosphate + H(+). Its function is as follows. Part of the ABC transporter complex UgpBAEC involved in sn-glycerol-3-phosphate (G3P) import. Responsible for energy coupling to the transport system. This is sn-glycerol-3-phosphate import ATP-binding protein UgpC from Yersinia enterocolitica serotype O:8 / biotype 1B (strain NCTC 13174 / 8081).